The primary structure comprises 444 residues: Acyl-CoA 6-desaturase (444 aa).

Residues 1–130 (MGGGGQQTDR…EAEGCFKTQP (130 aa)) lie on the Cytoplasmic side of the membrane. A Cytochrome b5 heme-binding domain is found at 18–95 (FSSYTWEEVQ…LKPLLIGELE (78 aa)). A helical membrane pass occupies residues 131 to 151 (LFFALHLGHILLLEAIAFMMV). Over 152–157 (WYFGTG) the chain is Lumenal. A helical transmembrane segment spans residues 158–178 (WINTLIVAVILATAQSQAGWL). The Cytoplasmic portion of the chain corresponds to 179-264 (QHDFGHLSVF…KHLPYNHQHK (86 aa)). The Histidine box-1 signature appears at 180 to 184 (HDFGH). Positions 217–221 (HFQHH) match the Histidine box-2 motif. Residues 265 to 285 (YFFFIGPPLLIPVYFQFQIFH) traverse the membrane as a helical segment. Residues 286–305 (NMISHGMWVDLLWCISYYVR) lie on the Lumenal side of the membrane. A helical membrane pass occupies residues 306 to 326 (YFLCYTQFYGVFWAIILFNFV). Over 327 to 444 (RFMESHWFVW…ELWLDAYLNK (118 aa)) the chain is Cytoplasmic. The Histidine box-3 motif lies at 382 to 386 (QIEHH).

The protein belongs to the fatty acid desaturase type 1 family.

Its subcellular location is the endoplasmic reticulum membrane. It catalyses the reaction (9Z,12Z)-octadecadienoyl-CoA + 2 Fe(II)-[cytochrome b5] + O2 + 2 H(+) = (6Z,9Z,12Z)-octadecatrienoyl-CoA + 2 Fe(III)-[cytochrome b5] + 2 H2O. It carries out the reaction (9Z,12Z,15Z)-octadecatrienoyl-CoA + 2 Fe(II)-[cytochrome b5] + O2 + 2 H(+) = (6Z,9Z,12Z,15Z)-octadecatetraenoyl-CoA + 2 Fe(III)-[cytochrome b5] + 2 H2O. The catalysed reaction is (8Z,11Z,14Z,17Z)-eicosatetraenoyl-CoA + 2 Fe(II)-[cytochrome b5] + O2 + 2 H(+) = (5Z,8Z,11Z,14Z,17Z)-eicosapentaenoyl-CoA + 2 Fe(III)-[cytochrome b5] + 2 H2O. The enzyme catalyses (8Z,11Z,14Z)-eicosatrienoyl-CoA + 2 Fe(II)-[cytochrome b5] + O2 + 2 H(+) = (5Z,8Z,11Z,14Z)-eicosatetraenoyl-CoA + 2 Fe(III)-[cytochrome b5] + 2 H2O. The protein operates within lipid metabolism; polyunsaturated fatty acid biosynthesis. Fatty acid desaturase with bifunctional delta-5 and delta-6 activities. Component of a lipid metabolic pathway that catalyzes the biosynthesis of polyunsaturated fatty acids (PUFA) with preference toward n-3 substrates and Delta-6 function. The sequence is that of Acyl-CoA 6-desaturase (fads2) from Danio rerio (Zebrafish).